We begin with the raw amino-acid sequence, 592 residues long: Imidazole glycerol phosphate synthase hisHF, chloroplastic (592 aa).

The transit peptide at 1–55 (MEATAAPFSSIVSSRQNFSSSSSIRASSPASLFLSQKSIGNVNRKFKSPRSLSVR) directs the protein to the chloroplast. A Glutamine amidotransferase type-1 domain is found at 63 to 271 (VVTLLDYGAG…LHPKLPATQK (209 aa)). Catalysis depends on for GATase activity residues Cys141, His246, and Glu248. The interval 280–592 (LAKRVIACLD…LQEERIEVRI (313 aa)) is cyclase. Active-site residues include Asp289 and Asp447.

It in the C-terminal section; belongs to the HisA/HisF family.

Its subcellular location is the plastid. The protein resides in the chloroplast. It catalyses the reaction 5-[(5-phospho-1-deoxy-D-ribulos-1-ylimino)methylamino]-1-(5-phospho-beta-D-ribosyl)imidazole-4-carboxamide + L-glutamine = D-erythro-1-(imidazol-4-yl)glycerol 3-phosphate + 5-amino-1-(5-phospho-beta-D-ribosyl)imidazole-4-carboxamide + L-glutamate + H(+). The enzyme catalyses L-glutamine + H2O = L-glutamate + NH4(+). It participates in amino-acid biosynthesis; L-histidine biosynthesis; L-histidine from 5-phospho-alpha-D-ribose 1-diphosphate: step 5/9. Functionally, IGPS catalyzes the conversion of PRFAR and glutamine to IGP, AICAR and glutamate. The glutaminase domain produces the ammonia necessary for the cyclase domain to produce IGP and AICAR from PRFAR. The ammonia is channeled to the active site of the cyclase domain. This chain is Imidazole glycerol phosphate synthase hisHF, chloroplastic (HISN4), found in Arabidopsis thaliana (Mouse-ear cress).